We begin with the raw amino-acid sequence, 117 residues long: Large ribosomal subunit protein uL18 (117 aa).

It belongs to the universal ribosomal protein uL18 family. As to quaternary structure, part of the 50S ribosomal subunit; part of the 5S rRNA/L5/L18/L25 subcomplex. Contacts the 5S and 23S rRNAs.

Functionally, this is one of the proteins that bind and probably mediate the attachment of the 5S RNA into the large ribosomal subunit, where it forms part of the central protuberance. This is Large ribosomal subunit protein uL18 from Photorhabdus laumondii subsp. laumondii (strain DSM 15139 / CIP 105565 / TT01) (Photorhabdus luminescens subsp. laumondii).